Reading from the N-terminus, the 568-residue chain is MKFLPTTKEEMKNLGWDSIDVLLISGDTYLDTSYNGSVLVGKWLVEHGFKVGIIAQPEVDVPDDITRLGEPNLFFAVSGGCVDSMVANYTATKKRRQQDDFTPGGVNNKRPDRAVLVYSNMIRRFFKGTTKKIVISGIESSLRRITHYDYWTNKLRKPILFDAKADILSYGMGEMSMLQLANALKNGEDWKNIKGLCYLSKEMKQDYLSLPSHSECLADKDNFIEAFHTFYLNCDPITAKGLCQKCDDRYLIQNPPSESYSEEIMDKIYSMEFARDVHPYYKKMGAVRALDTIKYSVTTHRGCYGECNFCAIAIHQGRTIMSRSQSSIVEEVKNIAGTPKFHGNISDVGGPTANMYGLECKKKLKLGACPDRRCLYPKKCLHLQVNHNNQVELLKKLKKIPNIKKIFIASGIRYDMILDDNKCGQMYLKEIIKDHISGQMKIAPEHTEDKILGLMGKDGKSCLNEFKNQFYKINNELGKKQFLTYYLIAAHPGCKDKDMMDLKRYASQELRVNPEQVQIFTPTPSTYSTLMYYTEKDPFTNQKLFVEKDNGKKQKQKDIVTEKRKNRK.

In terms of domain architecture, Radical SAM core spans 289-562; sequence ALDTIKYSVT…KQKQKDIVTE (274 aa). [4Fe-4S] cluster is bound by residues Cys-303, Cys-307, and Cys-310. The tract at residues 546–568 is disordered; the sequence is VEKDNGKKQKQKDIVTEKRKNRK.

Belongs to the UPF0313 family. The cofactor is [4Fe-4S] cluster.

This Fusobacterium nucleatum subsp. nucleatum (strain ATCC 25586 / DSM 15643 / BCRC 10681 / CIP 101130 / JCM 8532 / KCTC 2640 / LMG 13131 / VPI 4355) protein is UPF0313 protein FN0734.